Consider the following 326-residue polypeptide: tRNA-dihydrouridine(20/20a) synthase (326 aa).

Residues 11 to 13 (PML) and Gln63 each bind FMN. The Proton donor role is filled by Cys93. Residues Lys132, His165, 205-207 (NGG), and 227-228 (GR) each bind FMN.

The protein belongs to the Dus family. DusA subfamily. FMN is required as a cofactor.

The catalysed reaction is 5,6-dihydrouridine(20) in tRNA + NADP(+) = uridine(20) in tRNA + NADPH + H(+). It carries out the reaction 5,6-dihydrouridine(20) in tRNA + NAD(+) = uridine(20) in tRNA + NADH + H(+). It catalyses the reaction 5,6-dihydrouridine(20a) in tRNA + NADP(+) = uridine(20a) in tRNA + NADPH + H(+). The enzyme catalyses 5,6-dihydrouridine(20a) in tRNA + NAD(+) = uridine(20a) in tRNA + NADH + H(+). In terms of biological role, catalyzes the synthesis of 5,6-dihydrouridine (D), a modified base found in the D-loop of most tRNAs, via the reduction of the C5-C6 double bond in target uridines. Specifically modifies U20 and U20a in tRNAs. The protein is tRNA-dihydrouridine(20/20a) synthase of Vibrio parahaemolyticus serotype O3:K6 (strain RIMD 2210633).